The sequence spans 337 residues: Glucokinase (337 aa).

11 to 16 (ADIGGT) provides a ligand contact to ATP.

It belongs to the bacterial glucokinase family.

The protein resides in the cytoplasm. The enzyme catalyses D-glucose + ATP = D-glucose 6-phosphate + ADP + H(+). This chain is Glucokinase, found in Xylella fastidiosa (strain M12).